Reading from the N-terminus, the 122-residue chain is Small ribosomal subunit protein uS13 (122 aa).

A disordered region spans residues 89-122 (GLRHRRGLPARGQRTKTNARTRKGPRRGVAGKRK).

This sequence belongs to the universal ribosomal protein uS13 family. Part of the 30S ribosomal subunit. Forms a loose heterodimer with protein S19. Forms two bridges to the 50S subunit in the 70S ribosome.

Functionally, located at the top of the head of the 30S subunit, it contacts several helices of the 16S rRNA. In the 70S ribosome it contacts the 23S rRNA (bridge B1a) and protein L5 of the 50S subunit (bridge B1b), connecting the 2 subunits; these bridges are implicated in subunit movement. Contacts the tRNAs in the A and P-sites. This is Small ribosomal subunit protein uS13 from Oleidesulfovibrio alaskensis (strain ATCC BAA-1058 / DSM 17464 / G20) (Desulfovibrio alaskensis).